The primary structure comprises 1602 residues: MAP kinase-activating death domain protein (1602 aa).

Residues 13–267 (YLVIVGARHP…VPVSGQKRVD (255 aa)) enclose the uDENN domain. Basic and acidic residues predominate over residues 105–121 (PKEKAEGGAGPRGKEGA). The tract at residues 105-167 (PKEKAEGGAG…GKRRAKAGNR (63 aa)) is disordered. Over residues 126–137 (ASEEAATESSES) the composition is skewed to low complexity. Positions 138–156 (GSTLQPPSADSTPDVNQSP) are enriched in polar residues. A Phosphoserine modification is found at serine 155. A compositionally biased stretch (basic residues) spans 157 to 166 (RGKRRAKAGN). The 141-residue stretch at 288–428 (RFTLVDFPLH…ESLELKKHLK (141 aa)) folds into the cDENN domain. Residues 430 to 564 (ALASMSLNTQ…LNPSNYAFQR (135 aa)) enclose the dDENN domain. Disordered regions lie at residues 603-635 (ALSV…SSYS) and 676-840 (QPQK…NSTE). Residues 614 to 629 (SDPTDDSGSDSMDYDD) show a composition bias toward acidic residues. A phosphoserine mark is found at serine 688 and serine 691. Positions 688–698 (SENSQENLPLR) are enriched in polar residues. Residues 699–711 (SSSSTTASSSPST) are compositionally biased toward low complexity. Serine 778 carries the phosphoserine modification. Over residues 789-803 (ESYTPRFSQHASGSR) the composition is skewed to polar residues. A phosphoserine mark is found at serine 812, serine 817, and serine 819. Residues 826–839 (RASSPNSTVSNNST) are compositionally biased toward low complexity. 5 positions are modified to phosphoserine: serine 857, serine 861, serine 895, serine 900, and serine 909. Disordered stretches follow at residues 870–920 (KGAR…SSEN), 1030–1089 (KEPD…DTRS), and 1113–1231 (TEEK…RSSE). Polar residues predominate over residues 911-920 (QGRSSNSSEN). The residue at position 1038 (serine 1038) is a Phosphoserine. Phosphothreonine is present on residues threonine 1040 and threonine 1045. Serine 1089 is subject to Phosphoserine. A compositionally biased stretch (polar residues) spans 1119-1134 (QISADSGVSLASASQR). Residues 1151–1162 (SSSQDSEVSNSS) are compositionally biased toward low complexity. Polar residues predominate over residues 1191–1209 (SRATLSDSEIETNSATSTI). Phosphothreonine is present on threonine 1194. Serine 1196 and serine 1225 each carry phosphoserine. The region spanning 1295–1370 (GMDQGPQEMI…GLVYSQQINE (76 aa)) is the Death domain.

The protein belongs to the MADD family. Interacts (via death domain) with TNFRSF1A (via death domain). Interacts with PIDD1. Interacts with YWHAZ. Interacts (via death domain) with KIF1B; links the motor KIF1B to Rab3-carrying vesicles in anterograde synaptic vesicle transport. Interacts with KIF1A. Interacts (via uDENN domain) with RAB3A, RAB3B, RAB3C and RAB3D; the GTP-bound form of the Rab proteins is preferred for interaction. In terms of tissue distribution, expressed in all tissues examined with the highest expression in brain.

It localises to the cell membrane. It is found in the cytoplasm. Its subcellular location is the cell projection. The protein resides in the axon. Its function is as follows. Guanyl-nucleotide exchange factor that regulates small GTPases of the Rab family. Converts GDP-bound inactive form of RAB27A and RAB27B to the GTP-bound active forms. Converts GDP-bound inactive form of RAB3A, RAB3C and RAB3D to the GTP-bound active forms, GTPases involved in synaptic vesicle exocytosis and vesicle secretion. Plays a role in synaptic vesicle formation and in vesicle trafficking at the neuromuscular junction. Involved in up-regulating a post-docking step of synaptic exocytosis in central synapses. Probably by binding to the motor proteins KIF1B and KIF1A, mediates motor-dependent transport of GTP-RAB3A-positive vesicles to the presynaptic nerve terminals. Plays a role in TNFA-mediated activation of the MAPK pathway, including ERK1/2. May link TNFRSF1A with MAP kinase activation. May be involved in the regulation of TNFA-induced apoptosis. In Rattus norvegicus (Rat), this protein is MAP kinase-activating death domain protein.